The sequence spans 193 residues: Probable nicotinate-nucleotide adenylyltransferase (193 aa).

It belongs to the NadD family.

It catalyses the reaction nicotinate beta-D-ribonucleotide + ATP + H(+) = deamido-NAD(+) + diphosphate. It participates in cofactor biosynthesis; NAD(+) biosynthesis; deamido-NAD(+) from nicotinate D-ribonucleotide: step 1/1. Functionally, catalyzes the reversible adenylation of nicotinate mononucleotide (NaMN) to nicotinic acid adenine dinucleotide (NaAD). The sequence is that of Probable nicotinate-nucleotide adenylyltransferase from Coprothermobacter proteolyticus (strain ATCC 35245 / DSM 5265 / OCM 4 / BT).